Consider the following 96-residue polypeptide: Cobalt transport protein CbiN (96 aa).

The next 2 membrane-spanning stretches (helical) occupy residues Trp-4–Gly-24 and Ile-59–Leu-79.

It belongs to the CbiN family. Forms an energy-coupling factor (ECF) transporter complex composed of an ATP-binding protein (A component, CbiO), a transmembrane protein (T component, CbiQ) and 2 possible substrate-capture proteins (S components, CbiM and CbiN) of unknown stoichimetry.

It is found in the cell membrane. It functions in the pathway cofactor biosynthesis; adenosylcobalamin biosynthesis. Part of the energy-coupling factor (ECF) transporter complex CbiMNOQ involved in cobalt import. The chain is Cobalt transport protein CbiN from Halobacterium salinarum (strain ATCC 29341 / DSM 671 / R1).